The following is an 87-amino-acid chain: Phosphoribosyl-ATP pyrophosphatase (87 aa).

This sequence belongs to the PRA-PH family.

Its subcellular location is the cytoplasm. It catalyses the reaction 1-(5-phospho-beta-D-ribosyl)-ATP + H2O = 1-(5-phospho-beta-D-ribosyl)-5'-AMP + diphosphate + H(+). The protein operates within amino-acid biosynthesis; L-histidine biosynthesis; L-histidine from 5-phospho-alpha-D-ribose 1-diphosphate: step 2/9. This is Phosphoribosyl-ATP pyrophosphatase from Corynebacterium diphtheriae (strain ATCC 700971 / NCTC 13129 / Biotype gravis).